The following is a 365-amino-acid chain: UDP-N-acetylglucosamine--N-acetylmuramyl-(pentapeptide) pyrophosphoryl-undecaprenol N-acetylglucosamine transferase (365 aa).

UDP-N-acetyl-alpha-D-glucosamine is bound by residues Thr17 to Gly19, Asn129, Arg167, Ser194, Ile250, Ala269 to Glu274, and Gln295.

It belongs to the glycosyltransferase 28 family. MurG subfamily.

The protein localises to the cell inner membrane. The enzyme catalyses di-trans,octa-cis-undecaprenyl diphospho-N-acetyl-alpha-D-muramoyl-L-alanyl-D-glutamyl-meso-2,6-diaminopimeloyl-D-alanyl-D-alanine + UDP-N-acetyl-alpha-D-glucosamine = di-trans,octa-cis-undecaprenyl diphospho-[N-acetyl-alpha-D-glucosaminyl-(1-&gt;4)]-N-acetyl-alpha-D-muramoyl-L-alanyl-D-glutamyl-meso-2,6-diaminopimeloyl-D-alanyl-D-alanine + UDP + H(+). It functions in the pathway cell wall biogenesis; peptidoglycan biosynthesis. Functionally, cell wall formation. Catalyzes the transfer of a GlcNAc subunit on undecaprenyl-pyrophosphoryl-MurNAc-pentapeptide (lipid intermediate I) to form undecaprenyl-pyrophosphoryl-MurNAc-(pentapeptide)GlcNAc (lipid intermediate II). This is UDP-N-acetylglucosamine--N-acetylmuramyl-(pentapeptide) pyrophosphoryl-undecaprenol N-acetylglucosamine transferase from Shewanella pealeana (strain ATCC 700345 / ANG-SQ1).